The primary structure comprises 180 residues: Large ribosomal subunit protein uL5 (180 aa).

Belongs to the universal ribosomal protein uL5 family. Part of the 50S ribosomal subunit; part of the 5S rRNA/L5/L18/L25 subcomplex. Contacts the 5S rRNA and the P site tRNA. Forms a bridge to the 30S subunit in the 70S ribosome.

Its function is as follows. This is one of the proteins that bind and probably mediate the attachment of the 5S RNA into the large ribosomal subunit, where it forms part of the central protuberance. In the 70S ribosome it contacts protein S13 of the 30S subunit (bridge B1b), connecting the 2 subunits; this bridge is implicated in subunit movement. Contacts the P site tRNA; the 5S rRNA and some of its associated proteins might help stabilize positioning of ribosome-bound tRNAs. This chain is Large ribosomal subunit protein uL5, found in Clostridium acetobutylicum (strain ATCC 824 / DSM 792 / JCM 1419 / IAM 19013 / LMG 5710 / NBRC 13948 / NRRL B-527 / VKM B-1787 / 2291 / W).